The following is a 181-amino-acid chain: Adenylate kinase (181 aa).

10 to 15 (GAGKGT) is a binding site for ATP. The tract at residues 30–59 (STGELFRKNIQDGTKLGVEAKRYLDAGDLV) is NMP. Residues threonine 31, arginine 36, 57–59 (DLV), 85–88 (GYPR), and glutamine 92 contribute to the AMP site. Residues 126–132 (GRGRADD) form an LID region. Arginine 127 is an ATP binding site. AMP-binding residues include arginine 129 and arginine 140. Position 166 (glycine 166) interacts with ATP.

It belongs to the adenylate kinase family. In terms of assembly, monomer.

The protein resides in the cytoplasm. The catalysed reaction is AMP + ATP = 2 ADP. The protein operates within purine metabolism; AMP biosynthesis via salvage pathway; AMP from ADP: step 1/1. Its function is as follows. Catalyzes the reversible transfer of the terminal phosphate group between ATP and AMP. Plays an important role in cellular energy homeostasis and in adenine nucleotide metabolism. The protein is Adenylate kinase of Mycobacterium ulcerans (strain Agy99).